The following is a 281-amino-acid chain: Aldo-keto reductase MAP_3007 (281 aa).

The active-site Proton donor is Y56. Positions 196, 234, 236, 237, 238, 245, and 272 each coordinate NADPH.

The protein belongs to the aldo/keto reductase family.

This is Aldo-keto reductase MAP_3007 from Mycolicibacterium paratuberculosis (strain ATCC BAA-968 / K-10) (Mycobacterium paratuberculosis).